Here is a 191-residue protein sequence, read N- to C-terminus: Recombination protein RecR (191 aa).

The C4-type zinc finger occupies cysteine 56 to cysteine 71. The Toprim domain maps to lysine 78–proline 170.

It belongs to the RecR family.

In terms of biological role, may play a role in DNA repair. It seems to be involved in an RecBC-independent recombinational process of DNA repair. It may act with RecF and RecO. The sequence is that of Recombination protein RecR from Mycoplasmopsis pulmonis (strain UAB CTIP) (Mycoplasma pulmonis).